Consider the following 123-residue polypeptide: Small ribosomal subunit protein uS12c (123 aa).

Belongs to the universal ribosomal protein uS12 family. In terms of assembly, part of the 30S ribosomal subunit.

The protein localises to the plastid. It is found in the chloroplast. Its function is as follows. With S4 and S5 plays an important role in translational accuracy. Located at the interface of the 30S and 50S subunits. This chain is Small ribosomal subunit protein uS12c (rps12), found in Chaetosphaeridium globosum (Charophycean green alga).